A 272-amino-acid polypeptide reads, in one-letter code: Tumor necrosis factor receptor superfamily member 4 (272 aa).

The first 19 residues, 1–19 (MYVWVQQPTALLLLALTLG), serve as a signal peptide directing secretion. The Extracellular segment spans residues 20–211 (VTARRLNCVK…PPTLVTPEGP (192 aa)). TNFR-Cys repeat units follow at residues 26 to 61 (NCVKHTYPSGHKCCRECQPGHGMVSRCDHTRDTLCH) and 62 to 103 (PCET…DTVC). 8 cysteine pairs are disulfide-bonded: Cys27-Cys38, Cys39-Cys52, Cys42-Cys60, Cys63-Cys77, Cys80-Cys95, Cys83-Cys103, Cys105-Cys123, and Cys126-Cys139. The stretch at 104-124 (RCRPGTQPRQDSGYKLGVDCV) is one TNFR-Cys 3; truncated repeat. Residues 125–165 (PCPPGHFSPGNNQACKPWTNCTLSGKQTRHPASDSLDAVCE) form a TNFR-Cys 4 repeat. A glycan (N-linked (GlcNAc...) asparagine) is linked at Asn144. A disulfide bond links Cys145 and Cys164. Residues 212–236 (AFAVLLGLGLGLLAPLTVLLALYLL) form a helical membrane-spanning segment. Over 237–272 (RKAWRLPNTPKPCWGNSFRTPIQEEHTDAHFTLAKI) the chain is Cytoplasmic.

Interacts with TRAF2, TRAF3 and TRAF5. In terms of tissue distribution, expressed in CD4(+) T-cells and in T-helper Th17 cells (at protein level).

Its subcellular location is the membrane. Functionally, receptor for TNFSF4/OX40L/GP34. Is a costimulatory molecule implicated in long-term T-cell immunity. The sequence is that of Tumor necrosis factor receptor superfamily member 4 (Tnfrsf4) from Mus musculus (Mouse).